A 512-amino-acid polypeptide reads, in one-letter code: Flavonoid 3'-monooxygenase (512 aa).

A helical transmembrane segment spans residues 1-21 (MEILSLILYTVIFSFLLQFIL). The Cytoplasmic segment spans residues 22–512 (RSFFRKRYPL…PRLEAQAYIG (491 aa)). C447 contacts heme.

Belongs to the cytochrome P450 family. The cofactor is heme. In terms of tissue distribution, high expression in petals and ovaries and to a lower extent in sepals, pedicels, anthers and stems. Not detected in leaves, style or roots.

The protein localises to the endoplasmic reticulum membrane. The catalysed reaction is a 3'-unsubstituted flavone + reduced [NADPH--hemoprotein reductase] + O2 = a 3'-hydroxyflavone + oxidized [NADPH--hemoprotein reductase] + H2O + H(+). It participates in secondary metabolite biosynthesis; flavonoid biosynthesis. Its function is as follows. Catalyzes the 3'-hydroxylation of the flavonoid B-ring to the 3',4'-hydroxylated state. Convert naringenin to eriodictyol and dihydrokaempferol to dihydroquercetin. The chain is Flavonoid 3'-monooxygenase (CYP75B2) from Petunia hybrida (Petunia).